An 845-amino-acid chain; its full sequence is Ribosome-releasing factor 2, mitochondrial (845 aa).

The N-terminal 28 residues, 1–28 (MIIATSLRSQTFCTWRAWRAVHSTAVRL), are a transit peptide targeting the mitochondrion. In terms of domain architecture, tr-type G spans 38–330 (DRTRNIGIIA…GVVKYLPSPL (293 aa)). GTP-binding positions include 47-54 (AHIDAGKT), 111-115 (DTPGH), and 165-168 (NKMD).

It belongs to the TRAFAC class translation factor GTPase superfamily. Classic translation factor GTPase family. EF-G/EF-2 subfamily.

The protein resides in the mitochondrion. Functionally, mitochondrial GTPase that mediates the disassembly of ribosomes from messenger RNA at the termination of mitochondrial protein biosynthesis. Not involved in the GTP-dependent ribosomal translocation step during translation elongation. In Scheffersomyces stipitis (strain ATCC 58785 / CBS 6054 / NBRC 10063 / NRRL Y-11545) (Yeast), this protein is Ribosome-releasing factor 2, mitochondrial.